The sequence spans 258 residues: C1q-related factor (258 aa).

Residues 1-16 (MLLVLVVLIPVLVSSG) form the signal peptide. Positions 39–120 (GPGAGARSDG…PGSGGSGAIS (82 aa)) are disordered. Residues 67–77 (GPQGKPGRTGK) are compositionally biased toward low complexity. The region spanning 67–115 (GPQGKPGRTGKPGPPGPPGDRGPPGPVGPPGEKGEPGKPGPPGLPGSGG) is the Collagen-like domain. Over residues 78 to 95 (PGPPGPPGDRGPPGPVGP) the composition is skewed to pro residues. The C1q domain maps to 125-258 (TTVPRVAFYA…TFSGFIIYSD (134 aa)).

As to quaternary structure, interacts with ADGRB3. Forms heterooligomers with C1QL4, when proteins are coexpressed; this interaction does not occur after secretion. Expressed in brainstem. More abundant in areas of the nervous system involved in motor function, such as the Purkinje cells of the cerebellum, the accessory olivary nucleus, the pons and the red nucleus.

The protein localises to the secreted. Its function is as follows. May regulate the number of excitatory synapses that are formed on hippocampus neurons. Has no effect on inhibitory synapses. The polypeptide is C1q-related factor (C1ql1) (Mus musculus (Mouse)).